Consider the following 405-residue polypeptide: L-carnitine CoA-transferase (405 aa).

2 residues coordinate CoA: lysine 97 and arginine 104. The active-site Nucleophile is aspartate 169.

It belongs to the CoA-transferase III family. CaiB subfamily. As to quaternary structure, homodimer.

The protein resides in the cytoplasm. It catalyses the reaction crotonobetainyl-CoA + (R)-carnitine = crotonobetaine + (R)-carnitinyl-CoA. It carries out the reaction 4-(trimethylamino)butanoyl-CoA + (R)-carnitine = (R)-carnitinyl-CoA + 4-(trimethylamino)butanoate. It participates in amine and polyamine metabolism; carnitine metabolism. Its function is as follows. Catalyzes the reversible transfer of the CoA moiety from gamma-butyrobetainyl-CoA to L-carnitine to generate L-carnitinyl-CoA and gamma-butyrobetaine. Is also able to catalyze the reversible transfer of the CoA moiety from gamma-butyrobetainyl-CoA or L-carnitinyl-CoA to crotonobetaine to generate crotonobetainyl-CoA. The sequence is that of L-carnitine CoA-transferase from Escherichia coli O139:H28 (strain E24377A / ETEC).